The chain runs to 111 residues: Regulator of ribonuclease activity B (111 aa).

Belongs to the RraB family. As to quaternary structure, interacts with the C-terminal region of Rne.

The protein resides in the cytoplasm. Globally modulates RNA abundance by binding to RNase E (Rne) and regulating its endonucleolytic activity. Can modulate Rne action in a substrate-dependent manner by altering the composition of the degradosome. This chain is Regulator of ribonuclease activity B, found in Pseudoalteromonas translucida (strain TAC 125).